Here is a 179-residue protein sequence, read N- to C-terminus: MVTNKGCTALTWAVDKGLEKVCEILIPNMSEQAINHVNNNGSTALTLAAWKGLEKICRLLIPKMSPQAINHVTNNGNTALTLAAWKGLEKICELLIPKMSSQAINQVTNNGDTALTLAAWKGLEKICEMLIPKMSEQAINQVTNNGNTALTLAADKSLEKICEMLIPKMSKQAINHMAL.

5 ANK repeats span residues 5–34 (KGCT…EQAI), 40–72 (NGST…INHV), 75–104 (NGNT…SQAI), 110–139 (NGDT…EQAI), and 145–174 (NGNT…KQAI).

The sequence is that of Putative ankyrin repeat protein RF_0922 from Rickettsia felis (strain ATCC VR-1525 / URRWXCal2) (Rickettsia azadi).